Here is a 188-residue protein sequence, read N- to C-terminus: PRA1 family protein F3 (188 aa).

Transmembrane regions (helical) follow at residues 74–94 (IVVLIVIFFSLIWHPTSLIVF), 95–115 (TVLVVVWIFLYFLRDEPIKLF), 123–143 (TVLIVLSVLTVVLLLLTNATF), and 145–165 (IVGALVTGAVLVLIHSVVRKT).

Belongs to the PRA1 family. As to quaternary structure, interacts with PRA1F2 and PRA1D. Interacts with ACD11 and BPA1. Expressed in lateral roots, lateral root caps and columella cells.

The protein resides in the endoplasmic reticulum membrane. The protein localises to the membrane. It localises to the cytoplasm. Its function is as follows. May be involved in both secretory and endocytic intracellular trafficking in the endosomal/prevacuolar compartments. This is PRA1 family protein F3 from Arabidopsis thaliana (Mouse-ear cress).